We begin with the raw amino-acid sequence, 279 residues long: MASQAMSWRGEGERVVRDLAAASTSSFVEHLSQSRPDLLPFGQALPAGVLPQTPHATTIVAMTFAGGVLMAGDRRATMGTMIASRHIEKVFPADGYSVLGIAGTAGLAIDITKLFQVELEHYEKIEGTPLSLEGKANRLGAMVRGNLPMALQGLAVVPLFAGFDPALSQGRLFSYDVTGGRYEELEHHSVGSGSVFARGAMKKLWKPGLSESDAVQVAVESLFDAADDDSATGGPDVIRKLWPIIYTVTRGGSRKIPQHELGTVVEQVLVRRAELGRES.

Residues 1-56 constitute a propeptide, removed in mature form; by autocatalysis; the sequence is MASQAMSWRGEGERVVRDLAAASTSSFVEHLSQSRPDLLPFGQALPAGVLPQTPHA. The active-site Nucleophile is T57.

The protein belongs to the peptidase T1B family. In terms of assembly, the 20S proteasome core is composed of 14 alpha and 14 beta subunits that assemble into four stacked heptameric rings, resulting in a barrel-shaped structure. The two inner rings, each composed of seven catalytic beta subunits, are sandwiched by two outer rings, each composed of seven alpha subunits. The catalytic chamber with the active sites is on the inside of the barrel. Has a gated structure, the ends of the cylinder being occluded by the N-termini of the alpha-subunits. Is capped by the proteasome-associated ATPase, ARC.

It localises to the cytoplasm. The enzyme catalyses Cleavage of peptide bonds with very broad specificity.. The protein operates within protein degradation; proteasomal Pup-dependent pathway. With respect to regulation, the formation of the proteasomal ATPase ARC-20S proteasome complex, likely via the docking of the C-termini of ARC into the intersubunit pockets in the alpha-rings, may trigger opening of the gate for substrate entry. Interconversion between the open-gate and close-gate conformations leads to a dynamic regulation of the 20S proteasome proteolysis activity. Its function is as follows. Component of the proteasome core, a large protease complex with broad specificity involved in protein degradation. The protein is Proteasome subunit beta of Renibacterium salmoninarum (strain ATCC 33209 / DSM 20767 / JCM 11484 / NBRC 15589 / NCIMB 2235).